Here is a 69-residue protein sequence, read N- to C-terminus: DNA-directed RNA polymerase subunit epsilon (69 aa).

The protein belongs to the RNA polymerase subunit epsilon family. In terms of assembly, monomer. RNAP is composed of a core of 2 alpha, a beta and a beta' subunit. The core is associated with a delta subunit, and at least one of epsilon or omega. When a sigma factor is associated with the core the holoenzyme is formed, which can initiate transcription.

It localises to the cytoplasm. It is found in the nucleoid. The enzyme catalyses RNA(n) + a ribonucleoside 5'-triphosphate = RNA(n+1) + diphosphate. In terms of biological role, a non-essential component of RNA polymerase (RNAP). Has a similar structure to bacteriophage T7 protein Gp2 (AC P03704), which is known to bind to RNAP in the DNA binding-cleft. Unlike Gp2 however, this protein does not inhibit transcription initiation. In vitro reconstitution experiments show this subunit is dispensible. This Bacillus subtilis (strain 168) protein is DNA-directed RNA polymerase subunit epsilon.